An 87-amino-acid chain; its full sequence is U14-lycotoxin-Ls1b (87 aa).

An N-terminal signal peptide occupies residues 1–20; it reads MNSKVFAVLLLLALSTCVLS. The 46-residue stretch at 21 to 66 folds into the WAP domain; it reads EKYCPTPRNTSCKKMNIRNNCCRDSDCTSNAFCCAEPCGNFCHKAS. Cystine bridges form between cysteine 24-cysteine 54, cysteine 32-cysteine 58, cysteine 41-cysteine 53, cysteine 42-cysteine 80, and cysteine 47-cysteine 62.

It belongs to the venom protein 11 family. 01 (wap-1) subfamily. In terms of processing, contains 5 disulfide bonds. In terms of tissue distribution, expressed by the venom gland.

It is found in the secreted. In terms of biological role, has antibacterial activity. This Lycosa singoriensis (Wolf spider) protein is U14-lycotoxin-Ls1b.